A 554-amino-acid chain; its full sequence is CTP synthase (554 aa).

The tract at residues 1–265 is amidoligase domain; that stretch reads MTPLIFVTGG…DELVIDQFKL (265 aa). Serine 13 contacts CTP. Residue serine 13 coordinates UTP. Residues 14-19 and aspartate 71 contribute to the ATP site; that span reads SLGKGI. Aspartate 71 and glutamate 139 together coordinate Mg(2+). CTP is bound by residues 146–148, 186–191, and lysine 222; these read DIE and KTKPTQ. Residues 186 to 191 and lysine 222 contribute to the UTP site; that span reads KTKPTQ. Residues 292 to 545 enclose the Glutamine amidotransferase type-1 domain; sequence TIAVVGKYVD…VRAAREKKAG (254 aa). L-glutamine is bound at residue glycine 353. Residue cysteine 380 is the Nucleophile; for glutamine hydrolysis of the active site. L-glutamine is bound by residues 381–384, glutamate 404, and arginine 471; that span reads YGMQ. Residues histidine 518 and glutamate 520 contribute to the active site.

It belongs to the CTP synthase family. In terms of assembly, homotetramer.

The catalysed reaction is UTP + L-glutamine + ATP + H2O = CTP + L-glutamate + ADP + phosphate + 2 H(+). The enzyme catalyses L-glutamine + H2O = L-glutamate + NH4(+). It catalyses the reaction UTP + NH4(+) + ATP = CTP + ADP + phosphate + 2 H(+). It functions in the pathway pyrimidine metabolism; CTP biosynthesis via de novo pathway; CTP from UDP: step 2/2. With respect to regulation, allosterically activated by GTP, when glutamine is the substrate; GTP has no effect on the reaction when ammonia is the substrate. The allosteric effector GTP functions by stabilizing the protein conformation that binds the tetrahedral intermediate(s) formed during glutamine hydrolysis. Inhibited by the product CTP, via allosteric rather than competitive inhibition. Catalyzes the ATP-dependent amination of UTP to CTP with either L-glutamine or ammonia as the source of nitrogen. Regulates intracellular CTP levels through interactions with the four ribonucleotide triphosphates. This Xanthomonas campestris pv. campestris (strain B100) protein is CTP synthase.